Reading from the N-terminus, the 413-residue chain is Ribulose bisphosphate carboxylase large chain (413 aa).

Substrate-binding residues include Asn-100 and Thr-150. Catalysis depends on Lys-152, which acts as the Proton acceptor. Lys-154 contributes to the substrate binding site. Residues Lys-178, Asp-180, and Glu-181 each contribute to the Mg(2+) site. Lys-178 is modified (N6-carboxylysine). His-271 functions as the Proton acceptor in the catalytic mechanism. The substrate site is built by Arg-272, His-304, and Ser-356.

Belongs to the RuBisCO large chain family. Type I subfamily. As to quaternary structure, heterohexadecamer of 8 large chains and 8 small chains; disulfide-linked. The disulfide link is formed within the large subunit homodimers. Requires Mg(2+) as cofactor. The disulfide bond which can form in the large chain dimeric partners within the hexadecamer appears to be associated with oxidative stress and protein turnover.

The protein localises to the plastid. The protein resides in the chloroplast. It catalyses the reaction 2 (2R)-3-phosphoglycerate + 2 H(+) = D-ribulose 1,5-bisphosphate + CO2 + H2O. It carries out the reaction D-ribulose 1,5-bisphosphate + O2 = 2-phosphoglycolate + (2R)-3-phosphoglycerate + 2 H(+). Its function is as follows. RuBisCO catalyzes two reactions: the carboxylation of D-ribulose 1,5-bisphosphate, the primary event in carbon dioxide fixation, as well as the oxidative fragmentation of the pentose substrate in the photorespiration process. Both reactions occur simultaneously and in competition at the same active site. In Adiantum pedatum (Northern maidenhair fern), this protein is Ribulose bisphosphate carboxylase large chain (rbcL).